A 145-amino-acid polypeptide reads, in one-letter code: Basic phospholipase A2 S2-22 (145 aa).

The signal sequence occupies residues 1-19 (MYPAHLLVLLAVCVSLLGA). Residues 20–27 (SDIPPQPL) constitute a propeptide that is removed on maturation. 7 cysteine pairs are disulfide-bonded: cysteine 38/cysteine 99, cysteine 54/cysteine 144, cysteine 56/cysteine 72, cysteine 71/cysteine 127, cysteine 78/cysteine 120, cysteine 88/cysteine 113, and cysteine 106/cysteine 118. The Ca(2+) site is built by tyrosine 55, glycine 57, and glycine 59. The active site involves histidine 75. Aspartate 76 contributes to the Ca(2+) binding site. Residue aspartate 121 is part of the active site.

Belongs to the phospholipase A2 family. Group I subfamily. D49 sub-subfamily. Ca(2+) is required as a cofactor. Expressed by the venom gland.

It localises to the secreted. The enzyme catalyses a 1,2-diacyl-sn-glycero-3-phosphocholine + H2O = a 1-acyl-sn-glycero-3-phosphocholine + a fatty acid + H(+). Snake venom phospholipase A2 (PLA2) that inhibits collagen-induced platelet aggregation. PLA2 catalyzes the calcium-dependent hydrolysis of the 2-acyl groups in 3-sn-phosphoglycerides. This is Basic phospholipase A2 S2-22 from Austrelaps superbus (Lowland copperhead snake).